A 154-amino-acid polypeptide reads, in one-letter code: D-ribose pyranase 2 (154 aa).

Histidine 20 (proton donor) is an active-site residue. Substrate-binding positions include aspartate 28, histidine 98, and 121-123 (WGN).

It belongs to the RbsD / FucU family. RbsD subfamily. As to quaternary structure, homodecamer.

It localises to the cytoplasm. It catalyses the reaction beta-D-ribopyranose = beta-D-ribofuranose. It participates in carbohydrate metabolism; D-ribose degradation; D-ribose 5-phosphate from beta-D-ribopyranose: step 1/2. Functionally, catalyzes the interconversion of beta-pyran and beta-furan forms of D-ribose. In Rubrobacter xylanophilus (strain DSM 9941 / JCM 11954 / NBRC 16129 / PRD-1), this protein is D-ribose pyranase 2.